The chain runs to 68 residues: uncharacterized protein (68 aa).

This is an uncharacterized protein from Saccharomyces cerevisiae (strain ATCC 204508 / S288c) (Baker's yeast).